The following is a 447-amino-acid chain: MSQSKADYINVIGAGLAGSEAAYQIAKRGIPVKLYEMRGVKATPQHKTTNFAELVCSNSFRGDSLTNAVGLLKEEMRRLDSIIMRNGEAHRVPAGGAMAVDREGYAEAVTAEIESHPLIEVIRKEITEIPDDAITVIASGPLTSDALAEKIHELNGGDGFYFYDAAAPIVDKATIDMNKVYLKSRYDKGEAAYLNCPMTKEEFMAFYEALTTAEEAPLNSFEKEKYFEGCMPIEVMAKRGIKTMLYGPMKPVGLEYPEDYMGPRDGDFKTPYAVVQLRQDNAAGSLYNIVGFQTHLKWGEQKRVFQMIPGLENAEFVRYGVMHRNSYMDSPNLLKQTFQSKSNPNLFFAGQMTGVEGYVESAASGLVAGINAARLFKGEDEVIFPHTTAIGSLPYYVTHAESKHFQPMNVNFGIIKELEGPRIRDKKERYEKIAERALKDLQTFIDA.

Residue 13 to 18 (GAGLAG) participates in FAD binding.

It belongs to the MnmG family. TrmFO subfamily. FAD serves as cofactor.

It localises to the cytoplasm. It carries out the reaction uridine(54) in tRNA + (6R)-5,10-methylene-5,6,7,8-tetrahydrofolate + NADH + H(+) = 5-methyluridine(54) in tRNA + (6S)-5,6,7,8-tetrahydrofolate + NAD(+). The enzyme catalyses uridine(54) in tRNA + (6R)-5,10-methylene-5,6,7,8-tetrahydrofolate + NADPH + H(+) = 5-methyluridine(54) in tRNA + (6S)-5,6,7,8-tetrahydrofolate + NADP(+). In terms of biological role, catalyzes the folate-dependent formation of 5-methyl-uridine at position 54 (M-5-U54) in all tRNAs. This chain is Methylenetetrahydrofolate--tRNA-(uracil-5-)-methyltransferase TrmFO, found in Streptococcus thermophilus (strain ATCC BAA-491 / LMD-9).